The chain runs to 47 residues: Large ribosomal subunit protein bL34 (47 aa).

Belongs to the bacterial ribosomal protein bL34 family.

In Mycobacterium leprae (strain TN), this protein is Large ribosomal subunit protein bL34 (rpmH).